The primary structure comprises 206 residues: Dephospho-CoA kinase (206 aa).

The 201-residue stretch at 4 to 204 (IVGLTGGIGS…QFYLQQAENK (201 aa)) folds into the DPCK domain. 12–17 (GSGKTT) is an ATP binding site.

Belongs to the CoaE family.

The protein localises to the cytoplasm. It catalyses the reaction 3'-dephospho-CoA + ATP = ADP + CoA + H(+). It functions in the pathway cofactor biosynthesis; coenzyme A biosynthesis; CoA from (R)-pantothenate: step 5/5. Catalyzes the phosphorylation of the 3'-hydroxyl group of dephosphocoenzyme A to form coenzyme A. The sequence is that of Dephospho-CoA kinase from Haemophilus influenzae (strain 86-028NP).